Here is a 253-residue protein sequence, read N- to C-terminus: Snake venom serine proteinase 14 (253 aa).

The N-terminal stretch at 1-18 is a signal peptide; sequence MVLIRVLANLLILQLSYA. Residues 19–24 constitute a propeptide that is removed on maturation; it reads QKSSEL. The region spanning 25-244 is the Peptidase S1 domain; sequence VIGGDECNIN…YTDWIQSIIA (220 aa). 6 disulfide bridges follow: C31–C158, C49–C65, C93–C251, C137–C205, C169–C184, and C195–C220. Residues H64 and D105 each act as charge relay system in the active site. N-linked (GlcNAc...) asparagine glycans are attached at residues N116, N117, and N149. The active-site Charge relay system is S199.

It belongs to the peptidase S1 family. Snake venom subfamily. As to quaternary structure, monomer. In terms of tissue distribution, expressed by the venom gland.

The protein localises to the secreted. In terms of biological role, snake venom serine protease that may act in the hemostasis system of the prey. The polypeptide is Snake venom serine proteinase 14 (Crotalus adamanteus (Eastern diamondback rattlesnake)).